Here is a 316-residue protein sequence, read N- to C-terminus: Bifunctional peptidase and (3S)-lysyl hydroxylase JMJD7 (316 aa).

The JmjC domain maps to 128–307 (VQKQCSNLPS…LKYSYFQLLD (180 aa)). Residues H178, D180, and H277 each contribute to the Fe cation site.

In terms of assembly, homodimer; disulfide-linked. Interacts with DRG1 and DRG2. Fe(2+) serves as cofactor.

Its subcellular location is the nucleus. It is found in the cytoplasm. It catalyses the reaction L-lysyl-[protein] + 2-oxoglutarate + O2 = (3S)-3-hydroxy-L-lysyl-[protein] + succinate + CO2. In terms of biological role, bifunctional enzyme that acts both as an endopeptidase and 2-oxoglutarate-dependent monooxygenase. Endopeptidase that cleaves histones N-terminal tails at the carboxyl side of methylated arginine or lysine residues, to generate 'tailless nucleosomes', which may trigger transcription elongation. Preferentially recognizes and cleaves monomethylated and dimethylated arginine residues of histones H2, H3 and H4. After initial cleavage, continues to digest histones tails via its aminopeptidase activity. Additionally, may play a role in protein biosynthesis by modifying the translation machinery. Acts as a Fe(2+) and 2-oxoglutarate-dependent monooxygenase, catalyzing (S)-stereospecific hydroxylation at C-3 of 'Lys-22' of DRG1 and 'Lys-21' of DRG2 translation factors (TRAFAC), promoting their interaction with ribonucleic acids (RNA). This Homo sapiens (Human) protein is Bifunctional peptidase and (3S)-lysyl hydroxylase JMJD7.